A 216-amino-acid polypeptide reads, in one-letter code: Large ribosomal subunit protein uL3 (216 aa).

This sequence belongs to the universal ribosomal protein uL3 family. In terms of assembly, part of the 50S ribosomal subunit. Forms a cluster with proteins L14 and L19.

Functionally, one of the primary rRNA binding proteins, it binds directly near the 3'-end of the 23S rRNA, where it nucleates assembly of the 50S subunit. In Symbiobacterium thermophilum (strain DSM 24528 / JCM 14929 / IAM 14863 / T), this protein is Large ribosomal subunit protein uL3.